We begin with the raw amino-acid sequence, 140 residues long: ATP synthase epsilon chain (140 aa).

The protein belongs to the ATPase epsilon chain family. As to quaternary structure, F-type ATPases have 2 components, CF(1) - the catalytic core - and CF(0) - the membrane proton channel. CF(1) has five subunits: alpha(3), beta(3), gamma(1), delta(1), epsilon(1). CF(0) has three main subunits: a, b and c.

It localises to the cell inner membrane. In terms of biological role, produces ATP from ADP in the presence of a proton gradient across the membrane. This Colwellia psychrerythraea (strain 34H / ATCC BAA-681) (Vibrio psychroerythus) protein is ATP synthase epsilon chain.